The following is a 343-amino-acid chain: Apolipoprotein L6 (343 aa).

Positions Met1–Glu10 are enriched in basic and acidic residues. The tract at residues Met1–Leu24 is disordered.

The protein belongs to the apolipoprotein L family. Widely expressed; highly expressed in the uterus, fetal brain and spinal cord, also detected in heart, liver, lung, colon, spleen, thymus, prostate, placenta, adrenal gland, salivary and mammary gland.

Its subcellular location is the cytoplasm. Its function is as follows. May affect the movement of lipids in the cytoplasm or allow the binding of lipids to organelles. This Homo sapiens (Human) protein is Apolipoprotein L6 (APOL6).